Here is a 214-residue protein sequence, read N- to C-terminus: MRISPYGAGSVTTTAIFCSLFFVTGFFLPQPGGAALSLAVLLFLFFTLFFYRDPEREIPTEPGAVIAPADGKIVLKQSIDHPVTGDGSTLVSIFMSPFNVHVNRIPISGRVLNLNYVPGKYLMAFDHRSMTDNERMEITLETAAGTIWFCQVSGFVARRIVCDLKPGQEVTTGNLFGMIKLGSRVDIVLPPSVKVSASVGMKTVGGTTILGWIY.

Ser183 acts as the Schiff-base intermediate with substrate; via pyruvic acid in catalysis. Ser183 bears the Pyruvic acid (Ser); by autocatalysis mark.

It belongs to the phosphatidylserine decarboxylase family. PSD-A subfamily. In terms of assembly, heterodimer of a large membrane-associated beta subunit and a small pyruvoyl-containing alpha subunit. The cofactor is pyruvate. Is synthesized initially as an inactive proenzyme. Formation of the active enzyme involves a self-maturation process in which the active site pyruvoyl group is generated from an internal serine residue via an autocatalytic post-translational modification. Two non-identical subunits are generated from the proenzyme in this reaction, and the pyruvate is formed at the N-terminus of the alpha chain, which is derived from the carboxyl end of the proenzyme. The post-translation cleavage follows an unusual pathway, termed non-hydrolytic serinolysis, in which the side chain hydroxyl group of the serine supplies its oxygen atom to form the C-terminus of the beta chain, while the remainder of the serine residue undergoes an oxidative deamination to produce ammonia and the pyruvoyl prosthetic group on the alpha chain.

The protein localises to the cell membrane. The catalysed reaction is a 1,2-diacyl-sn-glycero-3-phospho-L-serine + H(+) = a 1,2-diacyl-sn-glycero-3-phosphoethanolamine + CO2. It participates in phospholipid metabolism; phosphatidylethanolamine biosynthesis; phosphatidylethanolamine from CDP-diacylglycerol: step 2/2. Functionally, catalyzes the formation of phosphatidylethanolamine (PtdEtn) from phosphatidylserine (PtdSer). The protein is Phosphatidylserine decarboxylase proenzyme of Chlorobaculum parvum (strain DSM 263 / NCIMB 8327) (Chlorobium vibrioforme subsp. thiosulfatophilum).